The primary structure comprises 154 residues: Decarboxylase claH (154 aa).

Belongs to the tpcK family.

It catalyses the reaction atrochrysone carboxylate + H(+) = atrochrysone + CO2. Its pathway is pigment biosynthesis. Its function is as follows. Decarboxylase involved in the biosynthesis of the bianthraquinone cladofulvin, a conidial pigment not required for virulence but that plays a role in fitness and resistance to environmental stresses including UV light and low-temperature stress. The pathway begins with the synthesis of atrochrysone thioester by the polyketide synthase (PKS) claG. The atrochrysone carboxyl ACP thioesterase claF then breaks the thioester bond and releases the atrochrysone carboxylic acid from claG. This compound is decarboxylated by claH to yield emodin, which is further converted to chrysophanol hydroquinone by the reductase claC and the dehydratase claB. The cytochrome monooxygenase P450 claM then catalyzes the dimerization of nataloe-emodin to cladofulvin. The polypeptide is Decarboxylase claH (Passalora fulva (Tomato leaf mold)).